Consider the following 233-residue polypeptide: Transcriptional regulatory protein PrrA (233 aa).

Residues 9 to 123 form the Response regulatory domain; sequence RVLVVDDDSD…ELVARVKALL (115 aa). Position 58 is a 4-aspartylphosphate (Asp-58). The segment at residues 134–232 is a DNA-binding region (ompR/PhoB-type); that stretch reads SETIAVGPLE…VRGVGFVLRM (99 aa).

In terms of processing, phosphorylated by PrrB at Asp-58.

The protein localises to the cytoplasm. Its function is as follows. Member of the two-component regulatory system PrrB/PrrA that is involved specifically in early intracellular multiplication of Mycobacterium and is essential for its viability. Upon phosphorylation by PrrB, functions as a transcription regulator by direct binding to promoter regions of target genes to positively regulate their expression. Autoregulates its own expression. The chain is Transcriptional regulatory protein PrrA (prrA) from Mycobacterium leprae (strain TN).